Here is a 250-residue protein sequence, read N- to C-terminus: tRNA (guanine-N(1)-)-methyltransferase (250 aa).

Residues glycine 113 and 134–139 (IGDYVL) each bind S-adenosyl-L-methionine.

This sequence belongs to the RNA methyltransferase TrmD family. Homodimer.

It is found in the cytoplasm. It catalyses the reaction guanosine(37) in tRNA + S-adenosyl-L-methionine = N(1)-methylguanosine(37) in tRNA + S-adenosyl-L-homocysteine + H(+). Specifically methylates guanosine-37 in various tRNAs. The chain is tRNA (guanine-N(1)-)-methyltransferase from Buchnera aphidicola subsp. Baizongia pistaciae (strain Bp).